The following is a 421-amino-acid chain: D-inositol 3-phosphate glycosyltransferase (421 aa).

His9 serves as a coordination point for 1D-myo-inositol 3-phosphate. UDP-N-acetyl-alpha-D-glucosamine-binding positions include 15-16 (QP) and Gly23. 1D-myo-inositol 3-phosphate is bound by residues 20–25 (DAGGMN), Lys78, Tyr110, Thr134, and Arg154. UDP-N-acetyl-alpha-D-glucosamine contacts are provided by Arg231, Lys236, and Arg294. Mg(2+)-binding residues include Tyr303, Gln304, and Ala306. Positions 316 and 324 each coordinate UDP-N-acetyl-alpha-D-glucosamine. Residue Thr330 participates in Mg(2+) binding.

It belongs to the glycosyltransferase group 1 family. MshA subfamily. Homodimer.

It catalyses the reaction 1D-myo-inositol 3-phosphate + UDP-N-acetyl-alpha-D-glucosamine = 1D-myo-inositol 2-acetamido-2-deoxy-alpha-D-glucopyranoside 3-phosphate + UDP + H(+). Catalyzes the transfer of a N-acetyl-glucosamine moiety to 1D-myo-inositol 3-phosphate to produce 1D-myo-inositol 2-acetamido-2-deoxy-glucopyranoside 3-phosphate in the mycothiol biosynthesis pathway. The sequence is that of D-inositol 3-phosphate glycosyltransferase from Corynebacterium aurimucosum (strain ATCC 700975 / DSM 44827 / CIP 107346 / CN-1) (Corynebacterium nigricans).